Consider the following 130-residue polypeptide: Putative ankyrin repeat protein R886 (130 aa).

3 ANK repeats span residues 21–50 (NYDR…DITA), 54–83 (YGFT…SIIK), and 85–113 (DNLT…DIRY).

The protein is Putative ankyrin repeat protein R886 of Acanthamoeba polyphaga (Amoeba).